The primary structure comprises 1203 residues: MSEVKLTPEQNEAIHSSGKNILVSASAGSGKTFVMAQRIVEKVKQGIEIDRLFISTFTKKAASELRMRLERDLKKARQESSDENQACRLTLALQNLSNADIGTMDSFTQKLTKTNFNRVNIDPNFRILADQTESDLIRQEVFEQLVESYLSGDDGLNISKEKFEELIKNFSKDRNIAGFQKVVYTIYRFASATENPIKWLENQFLKGFETYKSLIDLSADFSADIKENLLIFFELLETSLTNGVVAKKGAGRDKANLILDNKNELLEAITTKDFATFTELFLSIDTDIRVGSSKDEILSALKKDFSVQKQDLVGSKSKPGEIRKFVDKIKHGQLIEKYQNQAFEIAENLQKFVIEFYQSYLERKKNENAFEYSDIAHFAIEILEENPDIRETLREHYDEIMIDEYQDTSHTQERMLELLSNGHNLFMVGDIKQSIYGFRLADPGLFLEKYKDYAKTENPNQLIRLKENFRSRGEVLTFTNDIFKHLMDEKLGEMTYGKEEALVQGNITDYPVESEKDFYPELLLYKENTSDEETDESEVRISDGEIKGAAQEIKKLIEAGVEPKDIAILVRSKSNNNKIEDILLSYDIPVVLDEGRVDFLKSMEVLIMLDVLRAIDNPLYDLSLVAMLRSPLFGFNEDELTRISTQGSHDLRFWDKILLSLNKEGQNPELINPSLENKLKAFYKKFTEWRKLVNQVAIHDLLWKIYTETYYFDYVGALKNGEIRQANLQALAVRAESYESSGYKGLFKFVRLINKFMEQNNDLASVNIKLPQSAVRVMTFHKSKGLEFDYVFLMNLQSRFNDRDLKENVILSRENGLGMKLIADLKDEADVITDFPYALVKMETFPYMVNKDLKQRAALSEEMRVLYVAFTRAKKKLYLVGKIKETDKKSGLDLYDNASLEGKILEDKFRNSSRGFQHWILALQNATKLPIKLNVYTKEELEAEKLEFTSQPDFKKLVEESEKFDNIMAHSDEIQKAQKIMNYEYPHQAATELSSIQTPSQVKKRSYEKQLQVGEIQPKSEFTRVKKLDFSDFGPKKVTAAEIGSATHSFMQYADFSQADLFSFQATLDEMGFDEKIKNQIDIAKILTLFDTDFGQFLSENVDKTVKEAPFSMLRTDEFAKEQYIVRGICDGFVKLTDKIVLFDYKTDRFTSSSAISEIKERYRDQMNLYSEALKKAYDVNQVDKYLILLGGPQQVFVEKLDD.

The region spanning 4–472 (VKLTPEQNEA…IRLKENFRSR (469 aa)) is the UvrD-like helicase ATP-binding domain. 25-32 (ASAGSGKT) lines the ATP pocket. Residues 503 to 785 (VQGNITDYPV…RVMTFHKSKG (283 aa)) enclose the UvrD-like helicase C-terminal domain.

The protein belongs to the helicase family. AddA subfamily. Heterodimer of AddA and AddB/RexB. It depends on Mg(2+) as a cofactor.

It catalyses the reaction Couples ATP hydrolysis with the unwinding of duplex DNA by translocating in the 3'-5' direction.. The catalysed reaction is ATP + H2O = ADP + phosphate + H(+). The heterodimer acts as both an ATP-dependent DNA helicase and an ATP-dependent, dual-direction single-stranded exonuclease. Recognizes the chi site generating a DNA molecule suitable for the initiation of homologous recombination. The AddA nuclease domain is required for chi fragment generation; this subunit has the helicase and 3' -&gt; 5' nuclease activities. The protein is ATP-dependent helicase/nuclease subunit A of Lactococcus lactis subsp. lactis (strain IL1403) (Streptococcus lactis).